A 539-amino-acid polypeptide reads, in one-letter code: Eukaryotic translation initiation factor 3 subunit L (539 aa).

In terms of domain architecture, PCI spans 306 to 514 (TFSDILLYIQ…IHIADTKVSH (209 aa)).

It belongs to the eIF-3 subunit L family. As to quaternary structure, component of the eukaryotic translation initiation factor 3 (eIF-3) complex. The eIF-3 complex interacts with pix.

It is found in the cytoplasm. Component of the eukaryotic translation initiation factor 3 (eIF-3) complex, which is involved in protein synthesis of a specialized repertoire of mRNAs and, together with other initiation factors, stimulates binding of mRNA and methionyl-tRNAi to the 40S ribosome. The eIF-3 complex specifically targets and initiates translation of a subset of mRNAs involved in cell proliferation. This is Eukaryotic translation initiation factor 3 subunit L from Drosophila yakuba (Fruit fly).